The chain runs to 171 residues: UPF0690 protein C1orf52 homolog A (171 aa).

Disordered regions lie at residues 1–56 (MAAE…GPDE) and 126–171 (NVYQ…KRKV). Residues 47-56 (EAKKLPGPDE) are compositionally biased toward basic and acidic residues. A compositionally biased stretch (acidic residues) spans 146-160 (EEEAQEDSPPSDDEQ).

It belongs to the UPF0690 family.

This Xenopus laevis (African clawed frog) protein is UPF0690 protein C1orf52 homolog A.